Reading from the N-terminus, the 653-residue chain is Structural protein ORF653 (653 aa).

A coiled-coil region spans residues 300-330 (AKEETKQETKQETGKEEEEKKETKQESQEQL). Over residues 302–326 (EETKQETKQETGKEEEEKKETKQES) the composition is skewed to basic and acidic residues. Disordered regions lie at residues 302 to 329 (EETK…SQEQ), 344 to 388 (GQPA…ENTP), and 626 to 653 (AGQQ…VKLS). Low complexity predominate over residues 371–381 (EENNAEAPQQR). Residues 505 to 649 (KEQELYKELD…EEEEEEGNDT (145 aa)) adopt a coiled-coil conformation. The span at 630-647 (EETDETTEEEEEEEEEGN) shows a compositional bias: acidic residues.

Its subcellular location is the virion. This Acidianus two-tailed virus (ATV) protein is Structural protein ORF653.